The sequence spans 481 residues: Ribosomal protein uS12 methylthiotransferase RimO (481 aa).

Positions 38–148 constitute an MTTase N-terminal domain; that stretch reads NRIGFVSLGC…VLKHVHKYVP (111 aa). Residues Cys-47, Cys-83, Cys-112, Cys-180, Cys-184, and Cys-187 each coordinate [4Fe-4S] cluster. The Radical SAM core domain maps to 166 to 403; that stretch reads LTPKHYAYLK…MEVQAEISAE (238 aa). Residues 406–472 form the TRAM domain; that stretch reads ARFVGRTMDI…EHDLWAELVD (67 aa).

The protein belongs to the methylthiotransferase family. RimO subfamily. [4Fe-4S] cluster is required as a cofactor.

The protein localises to the cytoplasm. It catalyses the reaction L-aspartate(89)-[ribosomal protein uS12]-hydrogen + (sulfur carrier)-SH + AH2 + 2 S-adenosyl-L-methionine = 3-methylsulfanyl-L-aspartate(89)-[ribosomal protein uS12]-hydrogen + (sulfur carrier)-H + 5'-deoxyadenosine + L-methionine + A + S-adenosyl-L-homocysteine + 2 H(+). Functionally, catalyzes the methylthiolation of an aspartic acid residue of ribosomal protein uS12. The chain is Ribosomal protein uS12 methylthiotransferase RimO from Shewanella oneidensis (strain ATCC 700550 / JCM 31522 / CIP 106686 / LMG 19005 / NCIMB 14063 / MR-1).